Reading from the N-terminus, the 143-residue chain is MFMGEYEHQLDAKGRMIVPSKFRYELNERFVITRGLDKCLFGYTLEEWQNIEEKMKSLPMTKRDARKFMRMFFSGAVEVELDKQGRINIPKNLREYANLTKECTVIGVSNRIEIWDRASWNGFYDESEDSFEDIAEDLIDFDF.

2 consecutive SpoVT-AbrB domains span residues 5 to 47 and 76 to 119; these read EYEH…TLEE and AVEV…DRAS.

It belongs to the MraZ family. In terms of assembly, forms oligomers.

The protein localises to the cytoplasm. The protein resides in the nucleoid. This Staphylococcus carnosus (strain TM300) protein is Transcriptional regulator MraZ.